A 499-amino-acid chain; its full sequence is Aspartyl/glutamyl-tRNA(Asn/Gln) amidotransferase subunit B (499 aa).

The protein belongs to the GatB/GatE family. GatB subfamily. In terms of assembly, heterotrimer of A, B and C subunits.

The enzyme catalyses L-glutamyl-tRNA(Gln) + L-glutamine + ATP + H2O = L-glutaminyl-tRNA(Gln) + L-glutamate + ADP + phosphate + H(+). The catalysed reaction is L-aspartyl-tRNA(Asn) + L-glutamine + ATP + H2O = L-asparaginyl-tRNA(Asn) + L-glutamate + ADP + phosphate + 2 H(+). Allows the formation of correctly charged Asn-tRNA(Asn) or Gln-tRNA(Gln) through the transamidation of misacylated Asp-tRNA(Asn) or Glu-tRNA(Gln) in organisms which lack either or both of asparaginyl-tRNA or glutaminyl-tRNA synthetases. The reaction takes place in the presence of glutamine and ATP through an activated phospho-Asp-tRNA(Asn) or phospho-Glu-tRNA(Gln). The sequence is that of Aspartyl/glutamyl-tRNA(Asn/Gln) amidotransferase subunit B from Bartonella tribocorum (strain CIP 105476 / IBS 506).